Reading from the N-terminus, the 299-residue chain is Zinc finger protein-like 1 homolog (299 aa).

A B box-type; degenerate zinc finger spans residues Met1 to Trp43. The segment at Cys53–Ser101 adopts an RING-type; atypical zinc-finger fold. Positions Ala200–Thr231 are disordered. Position 215 is a phosphoserine (Ser215). A helical transmembrane segment spans residues Trp256 to Leu276.

Belongs to the ZFPL1 family.

It localises to the membrane. The polypeptide is Zinc finger protein-like 1 homolog (Drosophila melanogaster (Fruit fly)).